Consider the following 98-residue polypeptide: Flagellar hook-basal body complex protein FliE (98 aa).

The protein belongs to the FliE family.

The protein localises to the bacterial flagellum basal body. This is Flagellar hook-basal body complex protein FliE from Listeria monocytogenes serovar 1/2a (strain ATCC BAA-679 / EGD-e).